The primary structure comprises 368 residues: tRNA-cytidine(32) 2-sulfurtransferase (368 aa).

Residues 95 to 100 (SGGKDS) carry the PP-loop motif motif. [4Fe-4S] cluster contacts are provided by Cys-170, Cys-173, and Cys-261.

It belongs to the TtcA family. In terms of assembly, homodimer. It depends on Mg(2+) as a cofactor. Requires [4Fe-4S] cluster as cofactor.

Its subcellular location is the cytoplasm. The enzyme catalyses cytidine(32) in tRNA + S-sulfanyl-L-cysteinyl-[cysteine desulfurase] + AH2 + ATP = 2-thiocytidine(32) in tRNA + L-cysteinyl-[cysteine desulfurase] + A + AMP + diphosphate + H(+). It functions in the pathway tRNA modification. Its function is as follows. Catalyzes the ATP-dependent 2-thiolation of cytidine in position 32 of tRNA, to form 2-thiocytidine (s(2)C32). The sulfur atoms are provided by the cysteine/cysteine desulfurase (IscS) system. This chain is tRNA-cytidine(32) 2-sulfurtransferase, found in Psychrobacter sp. (strain PRwf-1).